Here is a 673-residue protein sequence, read N- to C-terminus: Glycine--tRNA ligase beta subunit (673 aa).

The protein belongs to the class-II aminoacyl-tRNA synthetase family. As to quaternary structure, tetramer of two alpha and two beta subunits.

Its subcellular location is the cytoplasm. The enzyme catalyses tRNA(Gly) + glycine + ATP = glycyl-tRNA(Gly) + AMP + diphosphate. The polypeptide is Glycine--tRNA ligase beta subunit (Lactococcus lactis subsp. lactis (strain IL1403) (Streptococcus lactis)).